The chain runs to 397 residues: DNA replication and repair protein RecF (397 aa).

An ATP-binding site is contributed by 30–37 (GPNGQGKT).

The protein belongs to the RecF family.

It is found in the cytoplasm. The RecF protein is involved in DNA metabolism; it is required for DNA replication and normal SOS inducibility. RecF binds preferentially to single-stranded, linear DNA. It also seems to bind ATP. The polypeptide is DNA replication and repair protein RecF (Beutenbergia cavernae (strain ATCC BAA-8 / DSM 12333 / CCUG 43141 / JCM 11478 / NBRC 16432 / NCIMB 13614 / HKI 0122)).